Reading from the N-terminus, the 431-residue chain is Glutamyl-tRNA reductase (431 aa).

Residues 49–52 (TCNR), S109, 114–116 (EGQ), and Q120 contribute to the substrate site. Residue C50 is the Nucleophile of the active site. An NADP(+)-binding site is contributed by 189–194 (GAGKMS).

The protein belongs to the glutamyl-tRNA reductase family. Homodimer.

It catalyses the reaction (S)-4-amino-5-oxopentanoate + tRNA(Glu) + NADP(+) = L-glutamyl-tRNA(Glu) + NADPH + H(+). It functions in the pathway porphyrin-containing compound metabolism; protoporphyrin-IX biosynthesis; 5-aminolevulinate from L-glutamyl-tRNA(Glu): step 1/2. It participates in porphyrin-containing compound metabolism; chlorophyll biosynthesis. In terms of biological role, catalyzes the NADPH-dependent reduction of glutamyl-tRNA(Glu) to glutamate 1-semialdehyde (GSA). This chain is Glutamyl-tRNA reductase, found in Trichodesmium erythraeum (strain IMS101).